The sequence spans 835 residues: Leucine--tRNA ligase (835 aa).

Residues 36-46 (PYPSGKIHVGH) carry the 'HIGH' region motif. The short motif at 602-606 (KMSKS) is the 'KMSKS' region element. Residue lysine 605 participates in ATP binding.

This sequence belongs to the class-I aminoacyl-tRNA synthetase family.

The protein localises to the cytoplasm. It carries out the reaction tRNA(Leu) + L-leucine + ATP = L-leucyl-tRNA(Leu) + AMP + diphosphate. The polypeptide is Leucine--tRNA ligase (Rickettsia africae (strain ESF-5)).